The chain runs to 347 residues: Haptoglobin (347 aa).

An N-terminal signal peptide occupies residues 1–18 (MRALGAVITLLLWGQLFA). One can recognise a Sushi domain in the interval 31 to 88 (DSCPKPPEIANGYVEHLVRYQCKNYYRLRTEGDGVYALNSEKQWVNKAVGEQLPECEA). 2 disulfides stabilise this stretch: C52-C86 and C90-C207. Residues 103 to 345 (IIGGSLDAKG…ILDWIQKTIA (243 aa)) form the Peptidase S1 domain. N-linked (GlcNAc...) asparagine glycosylation is found at N148, N152, N182, N230, and N256. Intrachain disulfides connect C250/C281 and C292/C322. Residues 259-264 (VPENKI) are interaction with CD163.

This sequence belongs to the peptidase S1 family. In terms of assembly, tetramer of two alpha and two beta chains; disulfide-linked. The hemoglobin/haptoglobin complex is composed of a haptoglobin dimer bound to two hemoglobin alpha-beta dimers. Interacts with CD163. Interacts with ERGIC3. In terms of tissue distribution, expressed by the liver and secreted in plasma.

It localises to the secreted. Its function is as follows. As a result of hemolysis, hemoglobin is found to accumulate in the kidney and is secreted in the urine. Haptoglobin captures, and combines with free plasma hemoglobin to allow hepatic recycling of heme iron and to prevent kidney damage. Haptoglobin also acts as an antioxidant, has antibacterial activity and plays a role in modulating many aspects of the acute phase response. Hemoglobin/haptoglobin complexes are rapidly cleared by the macrophage CD163 scavenger receptor expressed on the surface of liver Kupfer cells through an endocytic lysosomal degradation pathway. This chain is Haptoglobin (HP), found in Oryctolagus cuniculus (Rabbit).